Reading from the N-terminus, the 88-residue chain is Large ribosomal subunit protein bL31B (88 aa).

It belongs to the bacterial ribosomal protein bL31 family. Type B subfamily. As to quaternary structure, part of the 50S ribosomal subunit.

The chain is Large ribosomal subunit protein bL31B from Corynebacterium diphtheriae (strain ATCC 700971 / NCTC 13129 / Biotype gravis).